The chain runs to 859 residues: Suppressor protein MPT5 (859 aa).

A disordered region spans residues 85 to 108 (MNNTSTSNSANSFSPNPNAASNST). Over residues 86–108 (NNTSTSNSANSFSPNPNAASNST) the composition is skewed to low complexity. Residues 188-596 (DNSSFGLSSS…KIKLKVKAYA (409 aa)) enclose the PUM-HD domain. Pumilio repeat units lie at residues 209 to 247 (PLRD…LMYE), 248 to 283 (QIKP…LLIQ), 284 to 320 (TIYP…LIIK), 325 to 362 (EFTS…FIID), 363 to 400 (AIVE…KISV), 401 to 438 (KIVQ…ELFN), 439 to 474 (RLSN…FIVN), and 503 to 539 (DIFT…AYNK). The disordered stretch occupies residues 620-658 (TINNENKNPHNKNSHNHNHNHNHNHAHNNNNNNNQKSHT). A compositionally biased stretch (basic residues) spans 628 to 645 (PHNKNSHNHNHNHNHNHA). 3 positions are modified to phosphoserine: serine 662, serine 834, and serine 838.

It localises to the cytoplasm. Functionally, RNA-binding protein involved in post-transcriptional regulation. Negatively regulates expression of HO by binding to the 3'-UTR of HO mRNA. Predominantly binds to mRNAs encoding chromatin modifiers and spindle pole body components. Recognizes and binds to 5'-TGTAA[CT]A[AT]TA-3' in the 3'-UTR of target mRNAs. Multicopy suppressor of POP2 mutation. Required for high temperature growth. In Saccharomyces cerevisiae (strain ATCC 204508 / S288c) (Baker's yeast), this protein is Suppressor protein MPT5 (MPT5).